The chain runs to 372 residues: MFRIAKNLVRTFEQSVQDTLALSQDSSNLDAFFQSIPPNLLSAQLESPVDAVSEGVKHTNVNETLSGLRIVWVDEMQFQLQSFFDYIVGFNDDPVPVVSNQHGFSYPDYRRITSIFNEHCGRTLKVNIWSAKGGTFRDEYISIISKESDDLDDVSLNHDERRPSSGEAHQFQALGFKVQWTPLIASTFTYHILNVNIPDGPAQSAGLIPDEDYIIGCQDGLLATGGETLLQDIVRSRANYDLVLYVYNKVSDCVRPITVHIGPDGRLGCNVGYGFLHRIPTVKHCPQQAQQQGQDDNPVPVPVPVESETAFVPSAFTAPPVPTKKKSKNKKGTQPLAMDDYFNEGRDKSSTAAKSAESDILAPPPQKQSSSD.

At Met-1 the chain carries N-acetylmethionine. 2 consecutive PDZ GRASP-type domains span residues 66 to 183 and 188 to 276; these read SGLR…WTPL and FTYH…YGFL. Residues 66–292 are GRASP; it reads SGLRIVWVDE…KHCPQQAQQQ (227 aa). Ser-155 carries the post-translational modification Phosphoserine. The interval 312–372 is disordered; it reads VPSAFTAPPV…PPPQKQSSSD (61 aa).

As to quaternary structure, homodimer. Interacts with BUG1 (via C-terminus), probably forming a heterooligomer consisting of a GRH1 dimer and a BUG1 dimer. Interacts with COPII coat components SEC23, SEC24, SFB2 and SFB3. In terms of processing, N-terminal acetylation; by N-terminal acetyltransferase NatC.

The protein resides in the cytoplasm. It is found in the golgi apparatus. Its subcellular location is the cis-Golgi network membrane. Functionally, involved in the spindle assembly checkpoint. Involved in ER to Golgi vesicle-mediated transport by either facilitating USO1-dependent and -independent tethering or increasing target accuracy of fusion events of COPII-coated vesicles. The protein is GRASP65 homolog protein 1 (GRH1) of Saccharomyces cerevisiae (strain ATCC 204508 / S288c) (Baker's yeast).